We begin with the raw amino-acid sequence, 288 residues long: Leucine-rich repeat-containing protein 72 (288 aa).

LRR repeat units lie at residues 47–68 (DVFELFLSQKELTEVIDLSRFK), 69–90 (KLKYLWLHHNKLHGITFLTRNY), 91–112 (CLAELYLNNNAIFDIEGLHYLP), and 113–134 (SLHILLLHHNELINLDATVKEL). The region spanning 148 to 186 (NPLCQYNLYRLYIIYHLPGVELLDRNQVTEKERRSMITL) is the LRRCT domain.

The chain is Leucine-rich repeat-containing protein 72 (LRRC72) from Bos taurus (Bovine).